Reading from the N-terminus, the 144-residue chain is Large ribosomal subunit protein uL13 (144 aa).

The protein belongs to the universal ribosomal protein uL13 family. As to quaternary structure, part of the 50S ribosomal subunit.

In terms of biological role, this protein is one of the early assembly proteins of the 50S ribosomal subunit, although it is not seen to bind rRNA by itself. It is important during the early stages of 50S assembly. This is Large ribosomal subunit protein uL13 from Nitrosospira multiformis (strain ATCC 25196 / NCIMB 11849 / C 71).